The following is a 116-amino-acid chain: Large ribosomal subunit protein bL17 (116 aa).

This sequence belongs to the bacterial ribosomal protein bL17 family. As to quaternary structure, part of the 50S ribosomal subunit. Contacts protein L32.

The sequence is that of Large ribosomal subunit protein bL17 from Prochlorococcus marinus (strain NATL2A).